A 1188-amino-acid chain; its full sequence is DNA-directed RNA polymerase subunit beta (1188 aa).

Belongs to the RNA polymerase beta chain family. As to quaternary structure, the RNAP catalytic core consists of 2 alpha, 1 beta, 1 beta' and 1 omega subunit. When a sigma factor is associated with the core the holoenzyme is formed, which can initiate transcription.

It carries out the reaction RNA(n) + a ribonucleoside 5'-triphosphate = RNA(n+1) + diphosphate. Functionally, DNA-dependent RNA polymerase catalyzes the transcription of DNA into RNA using the four ribonucleoside triphosphates as substrates. The sequence is that of DNA-directed RNA polymerase subunit beta from Streptococcus equi subsp. equi (strain 4047).